The chain runs to 446 residues: Na(+)-translocating NADH-quinone reductase subunit A (446 aa).

This sequence belongs to the NqrA family. As to quaternary structure, composed of six subunits; NqrA, NqrB, NqrC, NqrD, NqrE and NqrF.

The catalysed reaction is a ubiquinone + n Na(+)(in) + NADH + H(+) = a ubiquinol + n Na(+)(out) + NAD(+). Its activity is regulated as follows. This reaction is tightly coupled to the Na(+) pumping activity and specifically requires Na(+) for activity. Inhibited by korormicin and 2-N-heptyl-4-hydroxyquinoline N-oxide (HQNO). In terms of biological role, NQR complex catalyzes the reduction of ubiquinone-1 to ubiquinol by two successive reactions, coupled with the transport of Na(+) ions from the cytoplasm to the periplasm. NqrA to NqrE are probably involved in the second step, the conversion of ubisemiquinone to ubiquinol. The polypeptide is Na(+)-translocating NADH-quinone reductase subunit A (Vibrio alginolyticus).